Here is a 545-residue protein sequence, read N- to C-terminus: Probable zinc metalloprotease EGY2, chloroplastic (545 aa).

The transit peptide at 1-63 (MQLPAMSCSP…QIRNRRFVCQ (63 aa)) directs the protein to the chloroplast. The interval 66 to 142 (TETEPDGDGN…DATPASDAQE (77 aa)) is disordered. The span at 68-85 (TEPDGDGNGDEEKEELGD) shows a compositional bias: acidic residues. Polar residues-rich tracts occupy residues 88–109 (SSPSVYSVTQENGSAESETNAD) and 117–129 (NTEPLSSSDTVQN). 7 helical membrane-spanning segments follow: residues 256–276 (AVPEWFAAASFGVVTIFTLLL), 300–320 (VYGALVTAAIIGVHEIAHILA), 325–345 (GIKLAVPYFVPSWQIGSFGAI), 363–383 (AAGPLAGFSLGFVLLLLGFIL), 426–446 (PLVLWAWAGLLINAINSIPAG), 473–493 (LLGISALFNDVAFYWVVLIFF), and 513–533 (YISIGVAILLFGLLVCLPYPF).

The protein belongs to the peptidase M50B family.

The protein localises to the plastid. It is found in the chloroplast membrane. Probable membrane-associated metalloprotease that may be involved in chloroplast development. This is Probable zinc metalloprotease EGY2, chloroplastic (EGY2) from Oryza sativa subsp. indica (Rice).